Here is a 653-residue protein sequence, read N- to C-terminus: Leucine-rich repeat-containing protein 4 (653 aa).

An N-terminal signal peptide occupies residues 1 to 38 (MKLLWQVTVHHHTWNAILLPFVYLTAQVWILCAAIAAA). An LRRNT domain is found at 39–75 (ASAGPQNCPSVCSCSNQFSKVVCTRRGLSEVPQGIPS). Topologically, residues 39 to 527 (ASAGPQNCPS…SLDEVMKTTK (489 aa)) are extracellular. 2 cysteine pairs are disulfide-bonded: C46–C52 and C50–C61. LRR repeat units lie at residues 76 to 97 (NTRY…TFRH), 100 to 121 (HLEV…AFNG), 124 to 145 (SLNT…AFEY), 148 to 169 (KLRE…AFNR), 172 to 194 (SLMR…AFEG), 197 to 218 (NLKY…TPLV), 219 to 240 (GLEE…SFHG), 243 to 264 (SLKK…AFDG), and 267 to 288 (SLVE…LFTP). N-linked (GlcNAc...) asparagine glycans are attached at residues N277, N322, N363, N388, N410, N434, N440, N447, and N450. Residues 300–352 (NPWNCDCDILWLAWWLREYIPTNSTCCGRCHAPMHMRGRYLVEVDQASFQCSA) enclose the LRRCT domain. Intrachain disulfides connect C304–C329 and C306–C350. In terms of domain architecture, Ig-like spans 353–442 (PFIMDAPRDL…SNASAYLNVS (90 aa)). A disulfide bridge links C374 with C424. A helical membrane pass occupies residues 528–548 (IIIGCFVAVTLLAAAMLIVFY). Residues 549–653 (KLRKRHQQRS…TKDKVQETQI (105 aa)) are Cytoplasmic-facing.

As to quaternary structure, interacts with DLG4. Interacts (via LRR repeats) with NTNG2. Forms a complex with DLG4 and with NMDA receptors. In terms of processing, N-glycosylated. In terms of tissue distribution, specifically expressed in brain.

It localises to the membrane. The protein localises to the postsynaptic cell membrane. Functionally, synaptic adhesion protein. Regulates the formation of exitatory synapses through the recruitment of pre-and-postsynaptic proteins. Organize the lamina/pathway-specific differentiation of dendrites. Plays an important role for auditory synaptic responses. Involved in the suppression of glioma. This is Leucine-rich repeat-containing protein 4 (LRRC4) from Homo sapiens (Human).